Reading from the N-terminus, the 442-residue chain is Histidine--tRNA ligase (442 aa).

The tract at residues 416 to 442 (SGDETTVPVEEFPPEGGEELPTYEDYE) is disordered. The segment covering 427–442 (FPPEGGEELPTYEDYE) has biased composition (acidic residues).

The protein belongs to the class-II aminoacyl-tRNA synthetase family.

It localises to the cytoplasm. The catalysed reaction is tRNA(His) + L-histidine + ATP = L-histidyl-tRNA(His) + AMP + diphosphate + H(+). This chain is Histidine--tRNA ligase, found in Halorubrum lacusprofundi (strain ATCC 49239 / DSM 5036 / JCM 8891 / ACAM 34).